An 887-amino-acid polypeptide reads, in one-letter code: Alanine--tRNA ligase (887 aa).

Zn(2+)-binding residues include H564, H568, C676, and H680.

The protein belongs to the class-II aminoacyl-tRNA synthetase family. The cofactor is Zn(2+).

Its subcellular location is the cytoplasm. The enzyme catalyses tRNA(Ala) + L-alanine + ATP = L-alanyl-tRNA(Ala) + AMP + diphosphate. Catalyzes the attachment of alanine to tRNA(Ala) in a two-step reaction: alanine is first activated by ATP to form Ala-AMP and then transferred to the acceptor end of tRNA(Ala). Also edits incorrectly charged Ser-tRNA(Ala) and Gly-tRNA(Ala) via its editing domain. This chain is Alanine--tRNA ligase, found in Chelativorans sp. (strain BNC1).